The sequence spans 384 residues: Soluble hydrogenase, small subunit (384 aa).

Lys-194 carries the N6-(pyridoxal phosphate)lysine modification.

Belongs to the class-V pyridoxal-phosphate-dependent aminotransferase family. As to quaternary structure, heterodimer of a large and a small subunit. Requires pyridoxal 5'-phosphate as cofactor.

The protein resides in the cytoplasm. Functionally, soluble hydrogenase catalyzes both production and consumption of hydrogen from suitable artificial electron donors or acceptors. This subunit catalyzes the tritium-exchange activity. The protein is Soluble hydrogenase, small subunit of Synechococcus sp. (strain PCC 6716).